The sequence spans 91 residues: MTILGSISQIGSMKMGGSKSSFNGSSCGAGFGSNSSSSIISFFNPLLPVVAFISGTVTSITGLVAGALTGTVDGLGKGANTGILLGYTPNI.

Asn23 and Asn34 each carry an N-linked (GlcNAc...) asparagine glycan. A helical transmembrane segment spans residues Leu46–Leu68.

It localises to the membrane. This chain is Protein sigN139, found in Dictyostelium discoideum (Social amoeba).